A 310-amino-acid chain; its full sequence is Peroxidase 44 (310 aa).

Positions 1–20 (MRSITALFFLFCFLAPSALA) are cleaved as a signal peptide. 4 disulfides stabilise this stretch: C31-C110, C64-C69, C116-C305, and C194-C218. The active-site Proton acceptor is H62. Residues D63, V66, G68, D70, and S72 each contribute to the Ca(2+) site. Substrate is bound at residue P156. H187 is a heme b binding site. Position 188 (S188) interacts with Ca(2+). Residues D229, T232, and D237 each contribute to the Ca(2+) site.

This sequence belongs to the peroxidase family. Classical plant (class III) peroxidase subfamily. Heme b serves as cofactor. The cofactor is Ca(2+).

The protein resides in the secreted. It catalyses the reaction 2 a phenolic donor + H2O2 = 2 a phenolic radical donor + 2 H2O. Functionally, removal of H(2)O(2), oxidation of toxic reductants, biosynthesis and degradation of lignin, suberization, auxin catabolism, response to environmental stresses such as wounding, pathogen attack and oxidative stress. These functions might be dependent on each isozyme/isoform in each plant tissue. In Arabidopsis thaliana (Mouse-ear cress), this protein is Peroxidase 44 (PER44).